We begin with the raw amino-acid sequence, 160 residues long: Conopressin/conophysin, isoform 2 (160 aa).

An N-terminal signal peptide occupies residues 1-30 (MKCSVLQMSRLSWAMCLMLLMLLLLGTAQG). A disulfide bond links cysteine 31 and cysteine 36. A Glycine amide modification is found at glycine 39. Residues 40 to 47 (GKRAVDAL) constitute a propeptide that is removed on maturation. 7 disulfides stabilise this stretch: cysteine 53–cysteine 97, cysteine 56–cysteine 70, cysteine 64–cysteine 87, cysteine 71–cysteine 77, cysteine 104–cysteine 118, cysteine 112–cysteine 130, and cysteine 119–cysteine 124.

The protein belongs to the vasopressin/oxytocin family. Expressed by the venom gland.

Its subcellular location is the secreted. Functionally, targets vasopressin-oxytocin related receptors. This chain is Conopressin/conophysin, isoform 2, found in Conus monile (Necklace cone).